The sequence spans 313 residues: Ribosomal RNA small subunit methyltransferase H (313 aa).

Residues 35–37 (GGH), aspartate 55, phenylalanine 81, aspartate 103, and glutamine 110 each bind S-adenosyl-L-methionine.

It belongs to the methyltransferase superfamily. RsmH family.

The protein resides in the cytoplasm. The catalysed reaction is cytidine(1402) in 16S rRNA + S-adenosyl-L-methionine = N(4)-methylcytidine(1402) in 16S rRNA + S-adenosyl-L-homocysteine + H(+). Functionally, specifically methylates the N4 position of cytidine in position 1402 (C1402) of 16S rRNA. This is Ribosomal RNA small subunit methyltransferase H from Pseudomonas aeruginosa (strain UCBPP-PA14).